The chain runs to 646 residues: Protein SENSITIVE TO UV 2 (646 aa).

Positions 42–70 (PAPPPSTKISSSLSHPMQLQSSAGQQRKQ) are disordered. Residues 48 to 70 (TKISSSLSHPMQLQSSAGQQRKQ) show a composition bias toward polar residues. Positions 119–126 (NRRCDSEK) match the Nuclear localization signal motif. Positions 123–157 (DSEKDLEIDRLKKELERVSKQLLDVEQECSQLKKG) form a coiled coil. Residues 376 to 646 (KRTEQDVKQE…VFAFLGDNTI (271 aa)) form the Phosphatase tensin-type domain.

Belongs to the serpin family. As to quaternary structure, forms multimers through the coiled-coil domain. In terms of processing, probably phosphorylated by ATR. As to expression, accumulates throughout the root tip.

It localises to the nucleus. It is found in the cytoplasm. Functionally, required for tolerance to DNA-damaging and cross-linking agents such as UVB irradiation, gamma-radiation, aphidicolin, ionizing radiation and hydroxyurea (HU), cisplatin (CDDP) and mitomycin C (MMC). Involved in cell-cycle G2/M arrest in response to DNA damage. Required for aluminum-dependent gene regulation and root growth inhibition in an ATR-dependent manner by halting cell cycle progression and triggering loss of the quiescent center (QC). The polypeptide is Protein SENSITIVE TO UV 2 (Arabidopsis thaliana (Mouse-ear cress)).